An 85-amino-acid chain; its full sequence is Cell division protein ZapA (85 aa).

Residues 59-85 (TAVNVVHDYMKLQEKYEILERQLKEKE) adopt a coiled-coil conformation.

The protein belongs to the ZapA family. Type 2 subfamily. In terms of assembly, homodimer. Interacts with FtsZ.

The protein localises to the cytoplasm. In terms of biological role, activator of cell division through the inhibition of FtsZ GTPase activity, therefore promoting FtsZ assembly into bundles of protofilaments necessary for the formation of the division Z ring. It is recruited early at mid-cell but it is not essential for cell division. This chain is Cell division protein ZapA, found in Bacillus velezensis (strain DSM 23117 / BGSC 10A6 / LMG 26770 / FZB42) (Bacillus amyloliquefaciens subsp. plantarum).